We begin with the raw amino-acid sequence, 680 residues long: Leucine-rich repeat protein soc-2 homolog (680 aa).

Residues 1–19 (MNLCSSGATASTTSLSSTG) show a composition bias toward low complexity. Disordered regions lie at residues 1 to 54 (MNLC…SDVS) and 73 to 149 (TGTE…PIQA). Residues 26–49 (GVPGGGAEGGGGGGGSGNSGGGGK) show a composition bias toward gly residues. Residues 73-86 (TGTEELSNANSPAN) show a composition bias toward low complexity. Positions 87 to 96 (GAGGASGSTG) are enriched in gly residues. A compositionally biased stretch (low complexity) spans 97–106 (SGQQPTGSNG). 20 LRR repeats span residues 161–182 (RIKR…VKEC), 184–205 (HLTE…IGCL), 207–228 (SLRN…LQNC), 230–251 (QLKV…IYRL), 253–274 (SLTT…LRQL), 276–297 (NLTM…IGAL), 299–320 (NLTT…IGNC), 322–343 (NLSA…IGNL), 345–367 (SLVR…KNCK), 368–389 (SMDE…MLAS), 392–413 (GLTT…GPAQ), 416–437 (NVYS…IFSR), 440–461 (GLTK…IGTW), 463–484 (NMVE…IMNL), 486–507 (NLEI…IGNL), 509–530 (RLRI…IGLL), 532–553 (ELQR…IGHL), 555–576 (NLTH…IGSL), 578–600 (SLEN…LALC), and 602–623 (NLKY…IQAG). A compositionally biased stretch (gly residues) spans 658 to 668 (AGGNGGGGAAA). The tract at residues 658–680 (AGGNGGGGAAAAGGSASRSSDRR) is disordered. Low complexity predominate over residues 669–680 (AGGSASRSSDRR).

The protein belongs to the SHOC2 family.

Its function is as follows. Acts as a Ras effector and participates in MAPK pathway activation. Probably acts as a regulatory subunit of protein phosphatase that specifically dephosphorylates Raf kinase and stimulate Raf activity at specialized signaling complexes upon Ras activation. The sequence is that of Leucine-rich repeat protein soc-2 homolog (Sur-8) from Drosophila simulans (Fruit fly).